The chain runs to 67 residues: ATP synthase subunit c (67 aa).

The next 2 helical transmembrane spans lie at isoleucine 6–asparagine 26 and isoleucine 46–valine 66.

This sequence belongs to the ATPase C chain family. F-type ATPases have 2 components, F(1) - the catalytic core - and F(0) - the membrane proton channel. F(1) has five subunits: alpha(3), beta(3), gamma(1), delta(1), epsilon(1). F(0) has three main subunits: a(1), b(2) and c(10-14). The alpha and beta chains form an alternating ring which encloses part of the gamma chain. F(1) is attached to F(0) by a central stalk formed by the gamma and epsilon chains, while a peripheral stalk is formed by the delta and b chains.

It localises to the cell membrane. In terms of biological role, f(1)F(0) ATP synthase produces ATP from ADP in the presence of a proton or sodium gradient. F-type ATPases consist of two structural domains, F(1) containing the extramembraneous catalytic core and F(0) containing the membrane proton channel, linked together by a central stalk and a peripheral stalk. During catalysis, ATP synthesis in the catalytic domain of F(1) is coupled via a rotary mechanism of the central stalk subunits to proton translocation. Functionally, key component of the F(0) channel; it plays a direct role in translocation across the membrane. A homomeric c-ring of between 10-14 subunits forms the central stalk rotor element with the F(1) delta and epsilon subunits. The chain is ATP synthase subunit c from Streptococcus mutans serotype c (strain ATCC 700610 / UA159).